A 385-amino-acid polypeptide reads, in one-letter code: tRNA-specific 2-thiouridylase MnmA (385 aa).

Residues 18 to 25 (AMSGGVDS) and L44 contribute to the ATP site. C112 acts as the Nucleophile in catalysis. C112 and C209 form a disulfide bridge. Position 136 (G136) interacts with ATP. The interaction with tRNA stretch occupies residues 159-161 (RDQ). The active-site Cysteine persulfide intermediate is C209.

It belongs to the MnmA/TRMU family.

The protein localises to the cytoplasm. It catalyses the reaction S-sulfanyl-L-cysteinyl-[protein] + uridine(34) in tRNA + AH2 + ATP = 2-thiouridine(34) in tRNA + L-cysteinyl-[protein] + A + AMP + diphosphate + H(+). In terms of biological role, catalyzes the 2-thiolation of uridine at the wobble position (U34) of tRNA, leading to the formation of s(2)U34. This Methylorubrum populi (strain ATCC BAA-705 / NCIMB 13946 / BJ001) (Methylobacterium populi) protein is tRNA-specific 2-thiouridylase MnmA.